The following is a 302-amino-acid chain: tRNA-cytidine(32) 2-sulfurtransferase (302 aa).

The short motif at 45–50 (SGGKDS) is the PP-loop motif element. The [4Fe-4S] cluster site is built by Cys-120, Cys-123, and Cys-211.

Belongs to the TtcA family. As to quaternary structure, homodimer. It depends on Mg(2+) as a cofactor. [4Fe-4S] cluster serves as cofactor.

It localises to the cytoplasm. It carries out the reaction cytidine(32) in tRNA + S-sulfanyl-L-cysteinyl-[cysteine desulfurase] + AH2 + ATP = 2-thiocytidine(32) in tRNA + L-cysteinyl-[cysteine desulfurase] + A + AMP + diphosphate + H(+). Its pathway is tRNA modification. Its function is as follows. Catalyzes the ATP-dependent 2-thiolation of cytidine in position 32 of tRNA, to form 2-thiocytidine (s(2)C32). The sulfur atoms are provided by the cysteine/cysteine desulfurase (IscS) system. This Aeromonas hydrophila subsp. hydrophila (strain ATCC 7966 / DSM 30187 / BCRC 13018 / CCUG 14551 / JCM 1027 / KCTC 2358 / NCIMB 9240 / NCTC 8049) protein is tRNA-cytidine(32) 2-sulfurtransferase.